A 466-amino-acid chain; its full sequence is Arginine biosynthesis bifunctional protein ArgJ, mitochondrial (466 aa).

The N-terminal 9 residues, 1 to 9, are a transit peptide targeting the mitochondrion; the sequence is MSSLVLKRF. Residues Thr183, Lys209, Thr232, Glu320, Asn461, and Ser466 each coordinate substrate. Catalysis depends on Thr232, which acts as the Nucleophile.

The protein belongs to the ArgJ family. Heterodimer of an alpha and a beta chain. Post-translationally, the alpha and beta chains are autoproteolytically processed from a single precursor protein within the mitochondrion.

It localises to the mitochondrion matrix. It carries out the reaction N(2)-acetyl-L-ornithine + L-glutamate = N-acetyl-L-glutamate + L-ornithine. The catalysed reaction is L-glutamate + acetyl-CoA = N-acetyl-L-glutamate + CoA + H(+). Its pathway is amino-acid biosynthesis; L-arginine biosynthesis; L-ornithine and N-acetyl-L-glutamate from L-glutamate and N(2)-acetyl-L-ornithine (cyclic): step 1/1. It participates in amino-acid biosynthesis; L-arginine biosynthesis; N(2)-acetyl-L-ornithine from L-glutamate: step 1/4. Catalyzes two activities which are involved in the cyclic version of arginine biosynthesis: the synthesis of acetylglutamate from glutamate and acetyl-CoA, and of ornithine by transacetylation between acetylornithine and glutamate. The chain is Arginine biosynthesis bifunctional protein ArgJ, mitochondrial from Laccaria bicolor (strain S238N-H82 / ATCC MYA-4686) (Bicoloured deceiver).